A 1159-amino-acid chain; its full sequence is MKVTKVGGISHKKYTSEGRLVKSESEENRTDERLSALLNMRLDMYIKNPSSTETKENQKRIGKLKKFFSNKMVYLKDNTLSLKNGKKENIDREYSETDILESDVRDKKNFAVLKKIYLNENVNSEELEVFRNDIKKKLNKINSLKYSFEKNKANYQKINENNIEKVEGKSKRNIIYDYYRESAKRDAYVSNVKEAFDKLYKEEDIAKLVLEIENLTKLEKYKIREFYHEIIGRKNDKENFAKIIYEEIQNVNNMKELIEKVPDMSELKKSQVFYKYYLDKEELNDKNIKYAFCHFVEIEMSQLLKNYVYKRLSNISNDKIKRIFEYQNLKKLIENKLLNKLDTYVRNCGKYNYYLQDGEIATSDFIARNRQNEAFLRNIIGVSSVAYFSLRNILETENENDITGRMRGKTVKNNKGEEKYVSGEVDKIYNENKKNEVKENLKMFYSYDFNMDNKNEIEDFFANIDEAISSIRHGIVHFNLELEGKDIFAFKNIAPSEISKKMFQNEINEKKLKLKIFRQLNSANVFRYLEKYKILNYLKRTRFEFVNKNIPFVPSFTKLYSRIDDLKNSLGIYWKTPKTNDDNKTKEIIDAQIYLLKNIYYGEFLNYFMSNNGNFFEISKEIIELNKNDKRNLKTGFYKLQKFEDIQEKIPKEYLANIQSLYMINAGNQDEEEKDTYIDFIQKIFLKGFMTYLANNGRLSLIYIGSDEETNTSLAEKKQEFDKFLKKYEQNNNIKIPYEINEFLREIKLGNILKYTERLNMFYLILKLLNHKELTNLKGSLEKYQSANKEEAFSDQLELINLLNLDNNRVTEDFELEADEIGKFLDFNGNKVKDNKELKKFDTNKIYFDGENIIKHRAFYNIKKYGMLNLLEKIADKAGYKISIEELKKYSNKKNEIEKNHKMQENLHRKYARPRKDEKFTDEDYESYKQAIENIEEYTHLKNKVEFNELNLLQGLLLRILHRLVGYTSIWERDLRFRLKGEFPENQYIEEIFNFENKKNVKYKGGQIVEKYIKFYKELHQNDEVKINKYSSANIKVLKQEKKDLYIRNYIAHFNYIPHAEISLLEVLENLRKLLSYDRKLKNAVMKSVVDILKEYGFVATFKIGADKKIGIQTLESEKIVHLKNLKKKKLMTDRNSEELCKLVKIMFEYKMEEKKSEN.

A binds crRNA repeat and spacer region spans residues 1-11; that stretch reads MKVTKVGGISH. The segment at 1-170 is NTD; it reads MKVTKVGGIS…NNIEKVEGKS (170 aa). Binds crRNA repeat stretches follow at residues 139-151, 172-176, 224-233, 271-276, 294-297, and 301-305; these read NKIN…FEKN, RNIIY, REFYHEIIGR, QVFYKY, HFVE, and SQLLK. The tract at residues 171–360 is helical-1; that stretch reads KRNIIYDYYR…YNYYLQDGEI (190 aa). A binds crRNA processing site region spans residues 319–328; that stretch reads KIKRIFEYQN. Binds crRNA repeat stretches follow at residues 336–340 and 371–378; these read KLLNK and QNEAFLRN. The interval 361–508 is HEPN-like fold 1-I; sequence ATSDFIARNR…SKKMFQNEIN (148 aa). Active-site for target RNA cleavage residues include Arg-472 and His-477. Residues 509-751 are helical-2; the sequence is EKKLKLKIFR…EFLREIKLGN (243 aa). The segment at 519–522 is binds target RNA; it reads QLNS. Residues 547–558 form a binds crRNA spacer region; that stretch reads NKNIPFVPSFTK. The tract at residues 590-597 is binds target RNA; that stretch reads DAQIYLLK. A binds crRNA spacer region spans residues 718–722; that stretch reads KQEFD. The HEPN-like fold 1-II stretch occupies residues 752 to 813; it reads ILKYTERLNM…NLDNNRVTED (62 aa). A binds crRNA repeat region spans residues 780–783; that stretch reads SLEK. Residues 804 to 810 form a binds crRNA spacer and target RNA region; the sequence is NLDNNRV. A linker region spans residues 814-946; the sequence is FELEADEIGK…EYTHLKNKVE (133 aa). Binds crRNA spacer regions lie at residues 845–857 and 938–942; these read KIYF…IKHR and YTHLK. Residues 880–946 adopt a coiled-coil conformation; that stretch reads YKISIEELKK…EYTHLKNKVE (67 aa). Positions 947–1159 are HEPN-like fold 2; that stretch reads FNELNLLQGL…YKMEEKKSEN (213 aa). The interval 962–963 is binds crRNA repeat; sequence HR. The tract at residues 995–998 is binds 3'-end of target RNA, in adjacent protein; the sequence is FENK. Residues Arg-1048 and His-1053 each act as for target RNA cleavage in the active site. Binds crRNA processing site regions lie at residues 1072–1082 and 1104–1108; these read RKLLSYDRKLK and IGADK.

Belongs to the CRISPR-associated endoribonuclease Cas13a family. As to quaternary structure, crystals show the 3'-end of target RNA interacting with an adjacent protein molecule, and mutagenesis of those amino acid residues decreases target RNA cleavage, but it is not clear if this is physiological. A divalent metal cation is required as a cofactor.

With respect to regulation, target RNA acts as an activator for non-specific ssRNA cleavage; the target RNA and complementary crRNA must both be at least 20 nucleotides long to activate the HEPN-like catalytic pocket for RNase activity. Its function is as follows. CRISPR (clustered regularly interspaced short palindromic repeat), is an adaptive immune system that provides protection against mobile genetic elements (viruses, transposable elements and conjugative plasmids). CRISPR clusters contain sequences complementary to antecedent mobile elements (spacer sequences) and target invading nucleic acids. Unlike many single-component effectors, this CRISPR-Cas system targets RNA. CRISPR clusters are transcribed from pre-CRISPR RNA (crRNA) and processed into crRNA by this protein. pre-crRNA processing yields a 5'-OH and probably a 2',3'-cyclic phosphate. Also cleaves pre-crRNA from several other type VI-A CRISPR systems. Cleaves linear target ssRNA in a crRNA-dependent fashion, preferentially before U residues. Cleavage of target ssRNA is about 80-fold faster than pre-crRNA processing and uses a different active site. Binding a viable target RNA target activates this protein for non-specific RNA degradation in vitro (called collateral RNA degradation). Activation occurs with 10 fM target RNA. crRNA maturation is not essential for activation of RNA degradation, but lack of mature crRNA (due to mutagenesis) decreases activation levels. This system has a 3' protospacer flanking site in the target RNA (PFS), which is C and unavailable to base pair with crRNA (PFS is equivalent to PAM, the protospacer adjacent motif). This is CRISPR-associated endoribonuclease Cas13a from Leptotrichia buccalis (strain ATCC 14201 / DSM 1135 / JCM 12969 / NCTC 10249 / C-1013-b).